Reading from the N-terminus, the 246-residue chain is MALIPLSQDLADILAPYLPTPPDSSARLPFVTLTYAQSLDARIAKQKGERTVISHEETKTMTHYLRYHHSGILIGSGTALADDPGLNCRWTPAADGADCTEQSSPRPIILDVRGRWRYRGSKIEYLHNLGKGKAPIVVTGGEPEVRELGVSYLQLGVDEGGRLNWGELFERLYSEHHLESVMVEGGAEVLNQLLLRPDIVDSLVITIGSKFLGSLGVAVSPAEEVNLEHVNWWHGTSDSVLCGRLA.

Residues T78, D82, L163, and 186 to 190 each bind NADP(+); that span reads GAEVL.

It belongs to the HTP reductase family. As to quaternary structure, homodimer.

The catalysed reaction is 2,5-diamino-6-(1-D-ribitylamino)pyrimidin-4(3H)-one 5'-phosphate + NADP(+) = 2,5-diamino-6-(1-D-ribosylamino)pyrimidin-4(3H)-one 5'-phosphate + NADPH + H(+). It carries out the reaction 2,5-diamino-6-(1-D-ribitylamino)pyrimidin-4(3H)-one 5'-phosphate + NAD(+) = 2,5-diamino-6-(1-D-ribosylamino)pyrimidin-4(3H)-one 5'-phosphate + NADH + H(+). The protein operates within cofactor biosynthesis; riboflavin biosynthesis. Its function is as follows. Catalyzes an early step in riboflavin biosynthesis, the NADPH-dependent reduction of the ribose side chain of 2,5-diamino-6-ribosylamino-4(3H)-pyrimidinone 5'-phosphate, yielding 2,5-diamino-6-ribitylamino-4(3H)-pyrimidinone 5'-phosphate. In Eremothecium gossypii (strain ATCC 10895 / CBS 109.51 / FGSC 9923 / NRRL Y-1056) (Yeast), this protein is 2,5-diamino-6-ribosylamino-4(3H)-pyrimidinone 5'-phosphate reductase (RIB7).